We begin with the raw amino-acid sequence, 462 residues long: Ubiquitin carboxyl-terminal hydrolase calypso (462 aa).

One can recognise a UCH catalytic domain in the interval 29 to 260 (GWLELESDPG…IRFNLMAVVP (232 aa)). The active-site Nucleophile is the cysteine 115. Histidine 197 functions as the Proton donor in the catalytic mechanism. Residues 357-385 (NYDKFICTFLSMLAHQGVLGELVSQHLLP) form the ULD domain. The positively charged C-terminal tail required for binding nucleosomes stretch occupies residues 387–462 (KKIANRLNRQ…KGRNKCRKRK (76 aa)). The span at 413–447 (GTNAAGSKSQQQQQQTQQQPQQTQTAKNGKSPGKT) shows a compositional bias: low complexity. The tract at residues 413–462 (GTNAAGSKSQQQQQQTQQQPQQTQTAKNGKSPGKTPGRRRKGRNKCRKRK) is disordered. The segment covering 448-462 (PGRRRKGRNKCRKRK) has biased composition (basic residues).

The protein belongs to the peptidase C12 family. BAP1 subfamily. As to quaternary structure, catalytic component of the polycomb repressive deubiquitinase (PR-DUB) complex, at least composed of caly/calypso, Asx and sba (MBD5/6 homolog). The PR-DUB complex associates with nucleosomes to mediate deubiquitination of histone H2AK118ub1 substrates; the association requires the positively charged C-terminal tail of caly, probably due to direct binding of DNA. Interacts (via ULD domain) with Asx (via DEUBAD domain); the interaction produces a stable heterodimer with a composite binding site for ubiquitin. Homodimerizes (via coiled-coil hinge-region between the UCH and ULD domains) to mediate assembly of 2 copies of the caly-Asx heterodimer into a bisymmetric tetramer; dimerization enhances PR-DUB association with nucleosomes.

The protein resides in the nucleus. The catalysed reaction is Thiol-dependent hydrolysis of ester, thioester, amide, peptide and isopeptide bonds formed by the C-terminal Gly of ubiquitin (a 76-residue protein attached to proteins as an intracellular targeting signal).. Catalytic component of the polycomb repressive deubiquitinase (PR-DUB) complex, a complex that specifically mediates deubiquitination of histone H2A monoubiquitinated at 'Lys-119' (H2AK118ub1). Mediates bisymmetric organization of the PR-DUB complex and is involved in association with nucleosomes to mediate deubiquitination. Does not deubiquitinate monoubiquitinated histone H2B. Required to maintain the transcriptionally repressive state of homeotic genes throughout development. The PR-DUB complex has weak or no activity toward 'Lys-48'- and 'Lys-63'-linked polyubiquitin chains. Polycomb group (PcG) protein. This is Ubiquitin carboxyl-terminal hydrolase calypso from Drosophila grimshawi (Hawaiian fruit fly).